The sequence spans 132 residues: Small ribosomal subunit protein uS8 (132 aa).

The protein belongs to the universal ribosomal protein uS8 family. As to quaternary structure, part of the 30S ribosomal subunit. Contacts proteins S5 and S12.

Its function is as follows. One of the primary rRNA binding proteins, it binds directly to 16S rRNA central domain where it helps coordinate assembly of the platform of the 30S subunit. This chain is Small ribosomal subunit protein uS8, found in Corynebacterium glutamicum (strain R).